The following is a 210-amino-acid chain: Redox-sensing transcriptional repressor Rex (210 aa).

The H-T-H motif DNA-binding region spans 16 to 55 (IYSRYLRQLIEEGVETVSSGEIAAGVGVSSAQVRKDLAYF). An NAD(+)-binding site is contributed by 90–95 (GAGKLG).

Belongs to the transcriptional regulatory Rex family. Homodimer.

The protein localises to the cytoplasm. Its function is as follows. Modulates transcription in response to changes in cellular NADH/NAD(+) redox state. This Syntrophomonas wolfei subsp. wolfei (strain DSM 2245B / Goettingen) protein is Redox-sensing transcriptional repressor Rex.